The primary structure comprises 382 residues: Sphingosine 1-phosphate receptor 1 (382 aa).

Residues 1-46 lie on the Extracellular side of the membrane; sequence MGSTRIPLVKALHSPVSDYVNYDIIVRHYNYTGKLKISADKDNGIK. N6-acetyllysine is present on lysine 10. Asparagine 30 carries N-linked (GlcNAc...) asparagine glycosylation. The helical transmembrane segment at 47–68 threads the bilayer; it reads LISVVFILICCFIILENIFVLL. The Cytoplasmic segment spans residues 69 to 82; the sequence is TIWKTKKFHRPMYY. A helical transmembrane segment spans residues 83 to 104; that stretch reads FIGNLALSDLLAGVAYTANLLL. Topologically, residues 105 to 116 are extracellular; that stretch reads SGATTYKLTPAQ. The chain crosses the membrane as a helical span at residues 117–138; the sequence is WFLREGSMFVALSASVFSLLAI. Residue 120–121 coordinates sphing-4-enine 1-phosphate; the sequence is RE. The Cytoplasmic segment spans residues 139 to 160; it reads AIERYITMLKMKLHNGSNRFRS. Residues 161-182 form a helical membrane-spanning segment; the sequence is FLLISACWVISLILGGLPIMGW. The Extracellular segment spans residues 183–196; the sequence is NCISTLPSCSTVLP. The cysteines at positions 184 and 191 are disulfide-linked. The chain crosses the membrane as a helical span at residues 197 to 224; the sequence is LYHKHYILFCTTVFTLLLLSIVILYCRI. Over 225–257 the chain is Cytoplasmic; that stretch reads YSLVRTRSRRLTFRKNISKASRSSEKSLALLKT. At threonine 236 the chain carries Phosphothreonine; by PKB/AKT1. Residues 258–278 form a helical membrane-spanning segment; it reads VIIVLGVFIACWAPLFILLLL. Residue 265-269 participates in sphing-4-enine 1-phosphate binding; sequence FIACW. Residues 279-289 lie on the Extracellular side of the membrane; it reads DVGCKVKTCDI. A disulfide bridge links cysteine 282 with cysteine 287. A helical transmembrane segment spans residues 290–310; sequence LFRTEYFLVLAVLNSGTNPII. Over 311-382 the chain is Cytoplasmic; it reads YTLSNKEMRR…MSSGNVNSSS (72 aa). Cysteine 328 carries the S-palmitoyl cysteine lipid modification. The tract at residues 349–382 is disordered; that stretch reads EFSRSKSDNSSHPQKDDGDNPETIMSSGNVNSSS. A phosphoserine mark is found at serine 351 and serine 353. A compositionally biased stretch (basic and acidic residues) spans 351-366; it reads SRSKSDNSSHPQKDDG. Positions 371–382 are enriched in polar residues; sequence TIMSSGNVNSSS.

The protein belongs to the G-protein coupled receptor 1 family. As to quaternary structure, interacts with GNAI1 and GNAI3. Interacts with CD69; this interaction promotes S1PR1 degradation. In terms of processing, S1P-induced endothelial cell migration requires the PKB/AKT1-mediated phosphorylation of the third intracellular loop at the Thr-236 residue. Palmitoylated by ZDHHC5. Palmitoylation is required for targeting to plasma membrane, enabling G(i) coupling.

It is found in the cell membrane. Its subcellular location is the endosome. The protein localises to the membrane raft. Functionally, G-protein coupled receptor for the bioactive lysosphingolipid sphingosine 1-phosphate (S1P) that seems to be coupled to the G(i) subclass of heteromeric G proteins. Signaling leads to the activation of RAC1, SRC, PTK2/FAK1 and MAP kinases. Plays an important role in cell migration, probably via its role in the reorganization of the actin cytoskeleton and the formation of lamellipodia in response to stimuli that increase the activity of the sphingosine kinase SPHK1. Required for normal chemotaxis toward sphingosine 1-phosphate. Required for normal embryonic heart development and normal cardiac morphogenesis. Plays an important role in the regulation of sprouting angiogenesis and vascular maturation. Inhibits sprouting angiogenesis to prevent excessive sprouting during blood vessel development. Required for normal egress of mature T-cells from the thymus into the blood stream and into peripheral lymphoid organs. Plays a role in the migration of osteoclast precursor cells, the regulation of bone mineralization and bone homeostasis. Plays a role in responses to oxidized 1-palmitoyl-2-arachidonoyl-sn-glycero-3-phosphocholine by pulmonary endothelial cells and in the protection against ventilator-induced lung injury. The chain is Sphingosine 1-phosphate receptor 1 (S1PR1) from Bos taurus (Bovine).